Here is a 182-residue protein sequence, read N- to C-terminus: MSSAAQPMSRRARRRAARRALGSQPGTSGGMVIPVSFVVSGATSADFVTYHSLYSRLAAYNGDLWIRRVAVRVTGSVAKRMGKYAFFEGLAVDKSQILSAAHARPYVYGLPSTLSLPGGRRQVKDFQSINLFFLLDGTAHAGEFAAGTFYFEFEGSPNVDFPRDSEGSNQAVEKFYLEHINA.

The segment at 1 to 25 (MSSAAQPMSRRARRRAARRALGSQP) is disordered.

Its subcellular location is the virion. Capsid protein self-assembles to form a quasi-spherical capsid, about 26 nm, or bacilliform. The polypeptide is Capsid protein (Olive latent virus 2 (isolate Italy) (OLV-2)).